A 616-amino-acid chain; its full sequence is Protein cereblon (616 aa).

Disordered stretches follow at residues 1-39 (MDEE…DDSV), 63-137 (FGPS…AMPR), and 182-220 (SQER…DIDM). Positions 11–32 (AQEQEVAGSAGEAAAGPSGAEV) are enriched in low complexity. Over residues 96–107 (SEEDIVLDDGTE) the composition is skewed to acidic residues. Over residues 183–192 (QERRRSRNSD) the composition is skewed to basic and acidic residues. Residues 194-203 (VSPEAEDDEL) show a composition bias toward acidic residues. Pro residues predominate over residues 206-215 (HPPPPPPRPP). The 226-residue stretch at 257–482 (HMLIFLHQYI…LIGGILKEET (226 aa)) folds into the Lon N-terminal domain. Positions 481-590 (ETLFYCRYCN…LAGSSVRIGK (110 aa)) constitute a CULT domain. Zn(2+) is bound by residues Cys-486, Cys-489, Cys-555, and Cys-558.

It belongs to the CRBN family. Likely a component of a DCX (DDB1-CUL4-X-box) protein ligase complex. May interact with pic/DDB1. In terms of processing, ubiquitinated.

It is found in the nucleus. The protein operates within protein modification; protein ubiquitination. Its function is as follows. Substrate recognition component of a DCX (DDB1-CUL4-X-box) E3 protein ligase complex that mediates the ubiquitination and subsequent proteasomal degradation of target proteins. Has an essential role in mediating growth by negatively regulating insulin signaling. It also has a role in maintaining presynaptic function in the neuromuscular junction synapses of third-instar larvae. This is Protein cereblon from Drosophila pseudoobscura pseudoobscura (Fruit fly).